Here is a 539-residue protein sequence, read N- to C-terminus: Copine-C (539 aa).

C2 domains are found at residues 1–120 and 128–251; these read MIPS…KIVA and VTGK…PLIN. Residues Leu23, Asp24, Asp30, Asp83, Asp85, and Asp98 each coordinate Ca(2+). Residues 290-507 enclose the VWFA domain; sequence SLMTAIDCTG…ALAQETLKEI (218 aa).

Belongs to the copine family. Ca(2+) is required as a cofactor.

This chain is Copine-C (cpnC), found in Dictyostelium discoideum (Social amoeba).